The following is a 1222-amino-acid chain: ATP-dependent helicase/nuclease subunit A (1222 aa).

The UvrD-like helicase ATP-binding domain maps to 39 to 495; the sequence is QKRTAQQIEA…ILLKENFRSQ (457 aa). 60-67 contributes to the ATP binding site; sequence ASAGSGKT. The region spanning 524-810 is the UvrD-like helicase C-terminal domain; it reads QLIAGSHAQT…NLMTIHKSKG (287 aa).

It belongs to the helicase family. AddA subfamily. Heterodimer of AddA and AddB/RexB. The cofactor is Mg(2+).

It catalyses the reaction Couples ATP hydrolysis with the unwinding of duplex DNA by translocating in the 3'-5' direction.. It carries out the reaction ATP + H2O = ADP + phosphate + H(+). Its function is as follows. The heterodimer acts as both an ATP-dependent DNA helicase and an ATP-dependent, dual-direction single-stranded exonuclease. Recognizes the chi site generating a DNA molecule suitable for the initiation of homologous recombination. The AddA nuclease domain is required for chi fragment generation; this subunit has the helicase and 3' -&gt; 5' nuclease activities. This chain is ATP-dependent helicase/nuclease subunit A, found in Streptococcus pyogenes serotype M3 (strain ATCC BAA-595 / MGAS315).